The primary structure comprises 310 residues: L-lactate dehydrogenase (310 aa).

Residues V11, D32, Y62, and 76 to 77 (GV) contribute to the NAD(+) site. Substrate is bound by residues Q79, R85, and 117–120 (NPVD). NAD(+)-binding positions include 115–117 (ATN) and S140. 145-148 (DTAR) is a binding site for substrate. Beta-D-fructose 1,6-bisphosphate is bound by residues R150 and H165. The Proton acceptor role is filled by H172. Position 218 is a phosphotyrosine (Y218). Position 227 (T227) interacts with substrate.

Belongs to the LDH/MDH superfamily. LDH family. In terms of assembly, homotetramer.

Its subcellular location is the cytoplasm. It catalyses the reaction (S)-lactate + NAD(+) = pyruvate + NADH + H(+). Its pathway is fermentation; pyruvate fermentation to lactate; (S)-lactate from pyruvate: step 1/1. With respect to regulation, activated by citrate at pH 5. Allosterically activated by fructose 1,6-bisphosphate (FBP) at pH from 5.8 to 7.2. Its function is as follows. Catalyzes the conversion of lactate to pyruvate. The protein is L-lactate dehydrogenase of Thermus aquaticus.